A 339-amino-acid chain; its full sequence is Glucokinase (339 aa).

16-21 contacts ATP; it reads GDIGGT.

Belongs to the bacterial glucokinase family.

The protein resides in the cytoplasm. The catalysed reaction is D-glucose + ATP = D-glucose 6-phosphate + ADP + H(+). This is Glucokinase from Rhizobium meliloti (strain 1021) (Ensifer meliloti).